The primary structure comprises 368 residues: tRNA/tmRNA (uracil-C(5))-methyltransferase (368 aa).

Residues Q190, Y218, N223, E239, and D301 each contribute to the S-adenosyl-L-methionine site. C326 serves as the catalytic Nucleophile. E360 (proton acceptor) is an active-site residue.

It belongs to the class I-like SAM-binding methyltransferase superfamily. RNA M5U methyltransferase family. TrmA subfamily.

The catalysed reaction is uridine(54) in tRNA + S-adenosyl-L-methionine = 5-methyluridine(54) in tRNA + S-adenosyl-L-homocysteine + H(+). It carries out the reaction uridine(341) in tmRNA + S-adenosyl-L-methionine = 5-methyluridine(341) in tmRNA + S-adenosyl-L-homocysteine + H(+). In terms of biological role, dual-specificity methyltransferase that catalyzes the formation of 5-methyluridine at position 54 (m5U54) in all tRNAs, and that of position 341 (m5U341) in tmRNA (transfer-mRNA). This Aliivibrio salmonicida (strain LFI1238) (Vibrio salmonicida (strain LFI1238)) protein is tRNA/tmRNA (uracil-C(5))-methyltransferase.